The following is a 143-amino-acid chain: 3-hydroxyacyl-[acyl-carrier-protein] dehydratase FabZ (143 aa).

The active site involves histidine 49.

The protein belongs to the thioester dehydratase family. FabZ subfamily.

It localises to the cytoplasm. It catalyses the reaction a (3R)-hydroxyacyl-[ACP] = a (2E)-enoyl-[ACP] + H2O. In terms of biological role, involved in unsaturated fatty acids biosynthesis. Catalyzes the dehydration of short chain beta-hydroxyacyl-ACPs and long chain saturated and unsaturated beta-hydroxyacyl-ACPs. The chain is 3-hydroxyacyl-[acyl-carrier-protein] dehydratase FabZ from Ehrlichia chaffeensis (strain ATCC CRL-10679 / Arkansas).